Here is a 605-residue protein sequence, read N- to C-terminus: Mini-chromosome maintenance complex-binding protein (605 aa).

Residues S147 and S150 each carry the phosphoserine modification.

This sequence belongs to the MCMBP family. As to quaternary structure, interacts with the MCM complex.

It is found in the nucleus. Its function is as follows. Associated component of the MCM complex that acts as a regulator of DNA replication. Binds to the MCM complex during late S phase and may act by promoting the disassembly of the MCM complex from chromatin. The sequence is that of Mini-chromosome maintenance complex-binding protein from Drosophila melanogaster (Fruit fly).